We begin with the raw amino-acid sequence, 479 residues long: Ribosomal RNA small subunit methyltransferase F (479 aa).

Residues 125–131 (AAAPGSK), Glu149, Asp176, and Asp194 contribute to the S-adenosyl-L-methionine site. Cys247 functions as the Nucleophile in the catalytic mechanism.

This sequence belongs to the class I-like SAM-binding methyltransferase superfamily. RsmB/NOP family.

It localises to the cytoplasm. The catalysed reaction is cytidine(1407) in 16S rRNA + S-adenosyl-L-methionine = 5-methylcytidine(1407) in 16S rRNA + S-adenosyl-L-homocysteine + H(+). Specifically methylates the cytosine at position 1407 (m5C1407) of 16S rRNA. This chain is Ribosomal RNA small subunit methyltransferase F, found in Escherichia coli O127:H6 (strain E2348/69 / EPEC).